Reading from the N-terminus, the 78-residue chain is Probable [Fe-S]-dependent transcriptional repressor (78 aa).

Residues cysteine 56, cysteine 61, cysteine 64, and cysteine 70 each coordinate iron-sulfur cluster.

This sequence belongs to the FeoC family.

May function as a transcriptional regulator that controls feoABC expression. The polypeptide is Probable [Fe-S]-dependent transcriptional repressor (Escherichia coli O7:K1 (strain IAI39 / ExPEC)).